The following is a 187-amino-acid chain: Pseudo histidine-containing phosphotransfer protein 1 (187 aa).

The 96-residue stretch at Ser74–Tyr169 folds into the HPt domain.

Its function is as follows. Functions as a two-component phosphorelay mediator between cytokinin sensor histidine kinases and response regulators (B-type ARRs). Plays an important role in propagating cytokinin signal transduction. The polypeptide is Pseudo histidine-containing phosphotransfer protein 1 (Oryza sativa subsp. japonica (Rice)).